We begin with the raw amino-acid sequence, 487 residues long: Beta-barrel assembly-enhancing protease (487 aa).

The signal sequence occupies residues 1–27 (MFRQLKKNLVATLIAAMTIGQVAPAFA). Residue His136 coordinates Zn(2+). Glu137 is an active-site residue. Zn(2+) contacts are provided by His140 and Glu201. Catalysis depends on Asp205, which acts as the Proton donor. TPR repeat units lie at residues 309–342 (RAAQ…EPGN), 344–376 (WYLD…RTNP), 377–409 (VLQL…NKDD), and 427–460 (DQEL…VKLG).

The protein belongs to the peptidase M48 family. BepA subfamily. As to quaternary structure, interacts with BamA and LoiP. Zn(2+) serves as cofactor.

Its subcellular location is the periplasm. Protease activity is inhibited by the metal chelating reagents 1,10-phenanthroline and EDTA. Its function is as follows. Functions both as a chaperone and a metalloprotease. Maintains the integrity of the outer membrane by promoting either the assembly or the elimination of outer membrane proteins, depending on their folding state. Promotes disulfide rearrangement of LptD during its biogenesis, and proteolytic degradation of LptD and BamA when their proper assembly is compromised. May facilitate membrane attachment of LoiP under unfavorable conditions. This chain is Beta-barrel assembly-enhancing protease, found in Escherichia coli (strain K12).